We begin with the raw amino-acid sequence, 255 residues long: tRNA (guanine-N(1)-)-methyltransferase (255 aa).

Residues Gly-114 and 134–139 (IGDYIL) each bind S-adenosyl-L-methionine.

It belongs to the RNA methyltransferase TrmD family. Homodimer.

The protein localises to the cytoplasm. It catalyses the reaction guanosine(37) in tRNA + S-adenosyl-L-methionine = N(1)-methylguanosine(37) in tRNA + S-adenosyl-L-homocysteine + H(+). Its function is as follows. Specifically methylates guanosine-37 in various tRNAs. The polypeptide is tRNA (guanine-N(1)-)-methyltransferase (Blochmanniella pennsylvanica (strain BPEN)).